We begin with the raw amino-acid sequence, 122 residues long: Large ribosomal subunit protein uL14 (122 aa).

Belongs to the universal ribosomal protein uL14 family. In terms of assembly, part of the 50S ribosomal subunit. Forms a cluster with proteins L3 and L19. In the 70S ribosome, L14 and L19 interact and together make contacts with the 16S rRNA in bridges B5 and B8.

Functionally, binds to 23S rRNA. Forms part of two intersubunit bridges in the 70S ribosome. This is Large ribosomal subunit protein uL14 from Geobacillus thermodenitrificans (strain NG80-2).